The sequence spans 1123 residues: Translation initiation factor IF-2 (1123 aa).

Disordered stretches follow at residues 52–452 (LLKA…KVHI) and 480–512 (LARPSKPKSQQKAAPKPVAAMRKRRKETTRQRQ). 3 stretches are compositionally biased toward low complexity: residues 54–73 (KAGSAPRAAASPSKPAPGKA), 94–113 (KPAASSPPAAPAAPTKAKSP), and 121–133 (AAPSRPAAPKASA). Positions 170 to 187 (PPSPPARPVPQQPSPPSA) are enriched in pro residues. Over residues 193 to 206 (APIRRAAPNDAPRP) the composition is skewed to low complexity. Composition is skewed to pro residues over residues 207–217 (ANAPPSRPQPK) and 258–268 (SPRPAVSPRPS). The segment covering 285–304 (RPGAPTRPGTGAGRPSRPGG) has biased composition (low complexity). A compositionally biased stretch (gly residues) spans 320–339 (GNRGEGGRPPGGARPAGGGN). Over residues 388-403 (ATPPVSRPTATPPSPA) the composition is skewed to pro residues. Gly residues predominate over residues 412-422 (FRPGAGPGGQR). Over residues 425–439 (GRPDWDDSAKLDALR) the composition is skewed to basic and acidic residues. Low complexity predominate over residues 486–499 (PKSQQKAAPKPVAA). Residues 500-512 (MRKRRKETTRQRQ) show a composition bias toward basic residues. The region spanning 615–787 (RRPPVVTVMG…LLLVTEVEDL (173 aa)) is the tr-type G domain. The segment at 624 to 631 (GHVDHGKT) is G1. GTP is bound at residue 624-631 (GHVDHGKT). Positions 649 to 653 (GITQH) are G2. The G3 stretch occupies residues 674–677 (DTPG). Residues 674–678 (DTPGH) and 728–731 (NKID) contribute to the GTP site. The interval 728–731 (NKID) is G4. Residues 764 to 766 (SAI) form a G5 region.

It belongs to the TRAFAC class translation factor GTPase superfamily. Classic translation factor GTPase family. IF-2 subfamily.

It is found in the cytoplasm. One of the essential components for the initiation of protein synthesis. Protects formylmethionyl-tRNA from spontaneous hydrolysis and promotes its binding to the 30S ribosomal subunits. Also involved in the hydrolysis of GTP during the formation of the 70S ribosomal complex. In Synechococcus sp. (strain WH7803), this protein is Translation initiation factor IF-2.